We begin with the raw amino-acid sequence, 304 residues long: Mycothiol acetyltransferase (304 aa).

N-acetyltransferase domains are found at residues 16-155 and 164-304; these read AHVE…RTGL and VALS…YRRA. 1D-myo-inositol 2-(L-cysteinylamino)-2-deoxy-alpha-D-glucopyranoside is bound at residue glutamate 46. Position 87–89 (87–89) interacts with acetyl-CoA; the sequence is LVV. 1D-myo-inositol 2-(L-cysteinylamino)-2-deoxy-alpha-D-glucopyranoside contacts are provided by glutamate 190, lysine 230, and glutamate 237. Acetyl-CoA-binding positions include 241–243 and 248–254; these read LGV and AARGLGS. A 1D-myo-inositol 2-(L-cysteinylamino)-2-deoxy-alpha-D-glucopyranoside-binding site is contributed by tyrosine 275.

The protein belongs to the acetyltransferase family. MshD subfamily. As to quaternary structure, monomer.

It carries out the reaction 1D-myo-inositol 2-(L-cysteinylamino)-2-deoxy-alpha-D-glucopyranoside + acetyl-CoA = mycothiol + CoA + H(+). Its function is as follows. Catalyzes the transfer of acetyl from acetyl-CoA to desacetylmycothiol (Cys-GlcN-Ins) to form mycothiol. The chain is Mycothiol acetyltransferase from Clavibacter sepedonicus (Clavibacter michiganensis subsp. sepedonicus).